A 181-amino-acid chain; its full sequence is Adenine phosphoribosyltransferase (181 aa).

It belongs to the purine/pyrimidine phosphoribosyltransferase family. Homodimer.

Its subcellular location is the cytoplasm. The enzyme catalyses AMP + diphosphate = 5-phospho-alpha-D-ribose 1-diphosphate + adenine. The protein operates within purine metabolism; AMP biosynthesis via salvage pathway; AMP from adenine: step 1/1. Functionally, catalyzes a salvage reaction resulting in the formation of AMP, that is energically less costly than de novo synthesis. The polypeptide is Adenine phosphoribosyltransferase (Rhodopseudomonas palustris (strain HaA2)).